We begin with the raw amino-acid sequence, 381 residues long: Subtilisin J (381 aa).

The N-terminal stretch at 1–29 is a signal peptide; it reads MRSKKLWISLLFALTLIFTMAFSNMSVQA. Positions 30–106 are excised as a propeptide; the sequence is AGKSSTEKKY…VEEDHIAHEY (77 aa). Positions 38-103 constitute an Inhibitor I9 domain; that stretch reads KYIVGFKQTM…VAYVEEDHIA (66 aa). Gln-108 is a Ca(2+) binding site. Residues 111–380 enclose the Peptidase S8 domain; that stretch reads PYGISQIKAP…KGLINVQAAA (270 aa). Catalysis depends on Asp-138, which acts as the Charge relay system. Asp-147 serves as a coordination point for Ca(2+). Residue His-170 is the Charge relay system of the active site. Positions 181, 183, 185, 187, 275, 277, and 280 each coordinate Ca(2+). Ser-327 acts as the Charge relay system in catalysis.

The protein belongs to the peptidase S8 family. Ca(2+) serves as cofactor.

The protein localises to the secreted. The catalysed reaction is Hydrolysis of proteins with broad specificity for peptide bonds, and a preference for a large uncharged residue in P1. Hydrolyzes peptide amides.. Subtilisin is an extracellular alkaline serine protease, it catalyzes the hydrolysis of proteins and peptide amides. This is Subtilisin J (aprJ) from Geobacillus stearothermophilus (Bacillus stearothermophilus).